We begin with the raw amino-acid sequence, 290 residues long: Beta-lactamase OXY-2 (290 aa).

An N-terminal signal peptide occupies residues 1 to 27; that stretch reads MIKSSWRKIAMLAAAVPLLLASGALWA. Residue serine 72 is the Acyl-ester intermediate of the active site. 236–238 is a substrate binding site; sequence KTG.

It belongs to the class-A beta-lactamase family.

It carries out the reaction a beta-lactam + H2O = a substituted beta-amino acid. In terms of biological role, hydrolyzes broad-spectrum beta-lactam antibiotics. Active against all third-generation cephalosporins but ceftazidime. The sequence is that of Beta-lactamase OXY-2 (bla) from Klebsiella oxytoca.